A 244-amino-acid chain; its full sequence is MSLILLPAVDVVEGRAVRLVQGKAGSENDYGSALDAALCWQRDGADWIHLVDLDAAFGRGSNRELLSEMVGKLDVQVELSGGIRDDDSLNAALATGCARVNLGTAACENPHWCAQVIAEHGDKIAVGLDVQIVDGQHRLRGRGWETDGGDLWDVLENLDRQGCSRFIVTDVTKDGTLDGPNLDLLASVSDRTNVPVIASGGVSSLDDLRAIAKFTERGIEGAIVGKALYAERFTLPQALAVVRM.

The active-site Proton acceptor is the D10. D129 (proton donor) is an active-site residue.

This sequence belongs to the HisA/HisF family.

It localises to the cytoplasm. The enzyme catalyses 1-(5-phospho-beta-D-ribosyl)-5-[(5-phospho-beta-D-ribosylamino)methylideneamino]imidazole-4-carboxamide = 5-[(5-phospho-1-deoxy-D-ribulos-1-ylimino)methylamino]-1-(5-phospho-beta-D-ribosyl)imidazole-4-carboxamide. It carries out the reaction N-(5-phospho-beta-D-ribosyl)anthranilate = 1-(2-carboxyphenylamino)-1-deoxy-D-ribulose 5-phosphate. It functions in the pathway amino-acid biosynthesis; L-histidine biosynthesis; L-histidine from 5-phospho-alpha-D-ribose 1-diphosphate: step 4/9. Its pathway is amino-acid biosynthesis; L-tryptophan biosynthesis; L-tryptophan from chorismate: step 3/5. Its function is as follows. Involved in both the histidine and tryptophan biosynthetic pathways. The protein is Phosphoribosyl isomerase A (priA) of Mycobacterium leprae (strain TN).